The following is a 366-amino-acid chain: Ribonuclease P protein subunit drpp30 (366 aa).

The interval 265–366 (EDTQPTNNNI…DIDNNKRKRE (102 aa)) is disordered. The segment covering 275-290 (PHEKHINKESTGKETI) has biased composition (basic and acidic residues). 2 stretches are compositionally biased toward low complexity: residues 291 to 324 (PKPT…TPSI) and 333 to 351 (TAKS…AQKQ). A compositionally biased stretch (basic and acidic residues) spans 352–366 (GKMDIDIDNNKRKRE).

Belongs to the eukaryotic/archaeal RNase P protein component 3 family.

The protein localises to the nucleus. The catalysed reaction is Endonucleolytic cleavage of RNA, removing 5'-extranucleotides from tRNA precursor.. Its function is as follows. Component of ribonuclease P, a protein complex that generates mature tRNA molecules by cleaving their 5'-ends. The chain is Ribonuclease P protein subunit drpp30 (drpp30) from Dictyostelium discoideum (Social amoeba).